A 297-amino-acid polypeptide reads, in one-letter code: E3 ubiquitin-protein ligase TRIM52 (297 aa).

Residues 20-62 (CAICLDYFKDPVSISCGHNFCRGCVTQLWSKEDEEDQNEEEDE) form an RING-type; degenerate zinc finger. The important for rapid proteolytic degradation by the proteasome stretch occupies residues 72–167 (VGAMDGWDGS…DEDEDEELYP (96 aa)). The segment at 222–263 (NDQGMCFKHQEALKLFCEVDKEAICVVCRESRSHKQHSVLPL) adopts a B box-type zinc-finger fold. Zn(2+) contacts are provided by C227, H230, C249, and H255.

This sequence belongs to the TRIM/RBCC family. As to quaternary structure, (Microbial infection) Interacts with Japanese encephalitis virus non-structural protein 2 (NS2A); mediates the ubiquitination of NS2A, targeting it for proteasome-mediated degradation. Autoubiquitinated. Polyubiquitinated. Undergoes extremely rapid proteolytic degradation by the proteasome.

It is found in the cytoplasm. It localises to the cytosol. Its subcellular location is the nucleus. It carries out the reaction S-ubiquitinyl-[E2 ubiquitin-conjugating enzyme]-L-cysteine + [acceptor protein]-L-lysine = [E2 ubiquitin-conjugating enzyme]-L-cysteine + N(6)-ubiquitinyl-[acceptor protein]-L-lysine.. It functions in the pathway protein modification; protein ubiquitination. Functionally, E3 ubiquitin-protein ligase. Positively regulates the NF-kappa-B signaling pathway. (Microbial infection) Exhibits antiviral activity against Japanese encephalitis virus (JEV). Ubiquitinates the viral non-structural protein 2 (NS2A) and targets it for proteasome-mediated degradation. This is E3 ubiquitin-protein ligase TRIM52 (TRIM52) from Homo sapiens (Human).